A 230-amino-acid polypeptide reads, in one-letter code: Large ribosomal subunit protein uL1 (230 aa).

This sequence belongs to the universal ribosomal protein uL1 family. Part of the 50S ribosomal subunit.

Binds directly to 23S rRNA. The L1 stalk is quite mobile in the ribosome, and is involved in E site tRNA release. Its function is as follows. Protein L1 is also a translational repressor protein, it controls the translation of the L11 operon by binding to its mRNA. The protein is Large ribosomal subunit protein uL1 of Rhodopseudomonas palustris (strain BisA53).